Consider the following 246-residue polypeptide: Sensory transduction protein LytT (246 aa).

A Response regulatory domain is found at 4–120 (HIMIAEDERL…RFKIAMNRIR (117 aa)). D55 bears the 4-aspartylphosphate mark. Positions 136-243 (LVVNLDEKMM…AKGLFDALQG (108 aa)) constitute an HTH LytTR-type domain.

Post-translationally, phosphorylated by LytS.

Its subcellular location is the cytoplasm. Member of the two-component regulatory system LytS/LytT that probably regulates genes involved in cell wall metabolism. This chain is Sensory transduction protein LytT (lytT), found in Oceanobacillus iheyensis (strain DSM 14371 / CIP 107618 / JCM 11309 / KCTC 3954 / HTE831).